The chain runs to 90 residues: Probable Fe(2+)-trafficking protein (90 aa).

It belongs to the Fe(2+)-trafficking protein family.

Could be a mediator in iron transactions between iron acquisition and iron-requiring processes, such as synthesis and/or repair of Fe-S clusters in biosynthetic enzymes. The polypeptide is Probable Fe(2+)-trafficking protein (Pseudoalteromonas translucida (strain TAC 125)).